The sequence spans 274 residues: Remorin 4.2 (274 aa).

A compositionally biased stretch (basic and acidic residues) spans 1–30 (MLTLYHQERSPDATSNDRDETPETVVREVH). Disordered regions lie at residues 1 to 71 (MLTL…EGEN), 117 to 157 (TDHE…TVQR), and 218 to 245 (AMEK…AKRG). Polar residues-rich tracts occupy residues 61–71 (RSATTMSEGEN) and 145–156 (GPGQSRVGSTVQ). Positions 204–239 (MKKIERKLEERKAKAMEKTQNNVAKAQRKAEERRAT) form a coiled coil. The span at 231-245 (RKAEERRATAEAKRG) shows a compositional bias: basic and acidic residues.

It belongs to the remorin family. In terms of assembly, forms homodimer and heterodimer with REM4.1. Interacts with KIN11. In terms of processing, probably ubiquitinated and degraded by the 26S proteasome pathway. Predominantly detected in bud, stem, root, flower, silique, and leaves, and enhanced dramatically in senescence leaf.

Its subcellular location is the cell membrane. Functionally, collaborates with REM4.1 to positively regulate the BCTV and BSCTV susceptibility. The protein is Remorin 4.2 of Arabidopsis thaliana (Mouse-ear cress).